The sequence spans 420 residues: Glucose-1-phosphate adenylyltransferase (420 aa).

Alpha-D-glucose 1-phosphate contacts are provided by residues tyrosine 107, glycine 172, 187–188 (EK), and serine 205.

This sequence belongs to the bacterial/plant glucose-1-phosphate adenylyltransferase family. In terms of assembly, homotetramer.

It carries out the reaction alpha-D-glucose 1-phosphate + ATP + H(+) = ADP-alpha-D-glucose + diphosphate. The protein operates within glycan biosynthesis; glycogen biosynthesis. Its function is as follows. Involved in the biosynthesis of ADP-glucose, a building block required for the elongation reactions to produce glycogen. Catalyzes the reaction between ATP and alpha-D-glucose 1-phosphate (G1P) to produce pyrophosphate and ADP-Glc. The protein is Glucose-1-phosphate adenylyltransferase of Rhizobium rhizogenes (strain K84 / ATCC BAA-868) (Agrobacterium radiobacter).